Consider the following 380-residue polypeptide: Tryptophan 2,3-dioxygenase (380 aa).

Substrate-binding positions include 57–61 (FIITH) and R128. H313 is a heme binding site. Residue T328 participates in substrate binding.

This sequence belongs to the tryptophan 2,3-dioxygenase family. In terms of assembly, homotetramer. Dimer of dimers. The cofactor is heme.

It carries out the reaction L-tryptophan + O2 = N-formyl-L-kynurenine. The protein operates within amino-acid degradation; L-tryptophan degradation via kynurenine pathway; L-kynurenine from L-tryptophan: step 1/2. It functions in the pathway pigment biosynthesis; ommochrome biosynthesis. Its function is as follows. Heme-dependent dioxygenase that catalyzes the oxidative cleavage of the L-tryptophan (L-Trp) pyrrole ring and converts L-tryptophan to N-formyl-L-kynurenine. Catalyzes the oxidative cleavage of the indole moiety. This is Tryptophan 2,3-dioxygenase from Drosophila ananassae (Fruit fly).